The following is a 267-amino-acid chain: Hydroxyethylthiazole kinase 2 (267 aa).

Position 41 (Met41) interacts with substrate. Residues Lys116 and Thr166 each coordinate ATP. Gly193 is a substrate binding site.

Belongs to the Thz kinase family. Requires Mg(2+) as cofactor.

It carries out the reaction 5-(2-hydroxyethyl)-4-methylthiazole + ATP = 4-methyl-5-(2-phosphooxyethyl)-thiazole + ADP + H(+). The protein operates within cofactor biosynthesis; thiamine diphosphate biosynthesis; 4-methyl-5-(2-phosphoethyl)-thiazole from 5-(2-hydroxyethyl)-4-methylthiazole: step 1/1. In terms of biological role, catalyzes the phosphorylation of the hydroxyl group of 4-methyl-5-beta-hydroxyethylthiazole (THZ). The sequence is that of Hydroxyethylthiazole kinase 2 from Streptococcus pneumoniae (strain 70585).